The following is a 624-amino-acid chain: Laccase-1 (624 aa).

The signal sequence occupies residues 1–20 (MRGVVKLFFLSCSLVSLVSS). Plastocyanin-like domains are found at residues 69 to 183 (TKAL…HSPN) and 195 to 355 (DRIV…VVRY). The Cu cation site is built by His117, His119, His162, and His164. Cys138 and Cys578 form a disulfide bridge. Asn242, Asn320, and Asn430 each carry an N-linked (GlcNAc...) asparagine glycan. The 94-residue stretch at 469–562 (IIINNLDGVI…GKLAVVVIQP (94 aa)) folds into the Plastocyanin-like 3 domain. Cu cation contacts are provided by His480, His483, and His485. The N-linked (GlcNAc...) asparagine glycan is linked to Asn503. 4 residues coordinate Cu cation: His543, Cys544, His545, and His549. The disordered stretch occupies residues 582–603 (DPNAFGPARRSPSPSIQSSKTS). Residues 592 to 603 (SPSPSIQSSKTS) show a composition bias toward low complexity.

Belongs to the multicopper oxidase family. It depends on Cu cation as a cofactor.

It localises to the secreted. The protein resides in the cell wall. The enzyme catalyses 4 hydroquinone + O2 = 4 benzosemiquinone + 2 H2O. In terms of biological role, laccase that catalyzes the oxidation of certain aromatic compounds, including L-dopa, to quinones, which then polymerize to melanin. Able to oxidize a wide variety of aromatic diphenol and diamino groups in the ortho, meta, and para positions but not monophenolic groups such as in phenol, tyramine, or tyrosine. Plays an important role in virulence. Plays a role in dissemination to extrapulmonary sites but is not involved in pulmonary growth or in elicitation of cellular immune responses in the lung. This chain is Laccase-1 (LAC1), found in Cryptococcus neoformans var. grubii serotype A (strain H99 / ATCC 208821 / CBS 10515 / FGSC 9487) (Filobasidiella neoformans var. grubii).